Here is a 448-residue protein sequence, read N- to C-terminus: tRNA-2-methylthio-N(6)-dimethylallyladenosine synthase (448 aa).

In terms of domain architecture, MTTase N-terminal spans 7–123 (RSFYIHTFGC…LPALIGDAEE (117 aa)). [4Fe-4S] cluster-binding residues include C16, C52, C86, C159, C163, and C166. In terms of domain architecture, Radical SAM core spans 145–375 (REVGVGAFVP…IDLQLSISAE (231 aa)). Positions 378-441 (QEAVGSVVDV…SATLTGVNQG (64 aa)) constitute a TRAM domain.

It belongs to the methylthiotransferase family. MiaB subfamily. Monomer. [4Fe-4S] cluster serves as cofactor.

It is found in the cytoplasm. It carries out the reaction N(6)-dimethylallyladenosine(37) in tRNA + (sulfur carrier)-SH + AH2 + 2 S-adenosyl-L-methionine = 2-methylsulfanyl-N(6)-dimethylallyladenosine(37) in tRNA + (sulfur carrier)-H + 5'-deoxyadenosine + L-methionine + A + S-adenosyl-L-homocysteine + 2 H(+). Functionally, catalyzes the methylthiolation of N6-(dimethylallyl)adenosine (i(6)A), leading to the formation of 2-methylthio-N6-(dimethylallyl)adenosine (ms(2)i(6)A) at position 37 in tRNAs that read codons beginning with uridine. The protein is tRNA-2-methylthio-N(6)-dimethylallyladenosine synthase of Chlorobium phaeovibrioides (strain DSM 265 / 1930) (Prosthecochloris vibrioformis (strain DSM 265)).